Consider the following 256-residue polypeptide: Glucosamine-6-phosphate deaminase (256 aa).

The active-site Proton acceptor; for enolization step is the Asp68. Asn137 functions as the For ring-opening step in the catalytic mechanism. His139 acts as the Proton acceptor; for ring-opening step in catalysis. Glu144 acts as the For ring-opening step in catalysis.

This sequence belongs to the glucosamine/galactosamine-6-phosphate isomerase family. NagB subfamily.

The catalysed reaction is alpha-D-glucosamine 6-phosphate + H2O = beta-D-fructose 6-phosphate + NH4(+). The protein operates within amino-sugar metabolism; N-acetylneuraminate degradation; D-fructose 6-phosphate from N-acetylneuraminate: step 5/5. Catalyzes the reversible isomerization-deamination of glucosamine 6-phosphate (GlcN6P) to form fructose 6-phosphate (Fru6P) and ammonium ion. The polypeptide is Glucosamine-6-phosphate deaminase (Mycoplasmopsis pulmonis (strain UAB CTIP) (Mycoplasma pulmonis)).